A 145-amino-acid polypeptide reads, in one-letter code: Putative pre-16S rRNA nuclease (145 aa).

This sequence belongs to the YqgF nuclease family.

The protein localises to the cytoplasm. Its function is as follows. Could be a nuclease involved in processing of the 5'-end of pre-16S rRNA. This Levilactobacillus brevis (strain ATCC 367 / BCRC 12310 / CIP 105137 / JCM 1170 / LMG 11437 / NCIMB 947 / NCTC 947) (Lactobacillus brevis) protein is Putative pre-16S rRNA nuclease.